Consider the following 102-residue polypeptide: Large ribosomal subunit protein bL21 (102 aa).

This sequence belongs to the bacterial ribosomal protein bL21 family. Part of the 50S ribosomal subunit. Contacts protein L20.

Its function is as follows. This protein binds to 23S rRNA in the presence of protein L20. The chain is Large ribosomal subunit protein bL21 from Nitratidesulfovibrio vulgaris (strain DSM 19637 / Miyazaki F) (Desulfovibrio vulgaris).